The following is a 431-amino-acid chain: UDP-N-acetylglucosamine 1-carboxyvinyltransferase (431 aa).

24 to 25 is a binding site for phosphoenolpyruvate; the sequence is KN. A UDP-N-acetyl-alpha-D-glucosamine-binding site is contributed by Arg-95. Asp-119 (proton donor) is an active-site residue. 2 residues coordinate UDP-N-acetyl-alpha-D-glucosamine: Asp-314 and Met-336.

This sequence belongs to the EPSP synthase family. MurA subfamily.

The protein localises to the cytoplasm. It catalyses the reaction phosphoenolpyruvate + UDP-N-acetyl-alpha-D-glucosamine = UDP-N-acetyl-3-O-(1-carboxyvinyl)-alpha-D-glucosamine + phosphate. The protein operates within cell wall biogenesis; peptidoglycan biosynthesis. Its function is as follows. Cell wall formation. Adds enolpyruvyl to UDP-N-acetylglucosamine. The protein is UDP-N-acetylglucosamine 1-carboxyvinyltransferase of Bradyrhizobium diazoefficiens (strain JCM 10833 / BCRC 13528 / IAM 13628 / NBRC 14792 / USDA 110).